The primary structure comprises 478 residues: D-ribulose kinase (478 aa).

The N-terminal 38 residues, methionine 1–tyrosine 38, are a transit peptide targeting the chloroplast. Residues aspartate 60, serine 64–arginine 67, and aspartate 278 each bind substrate. ATP is bound by residues serine 300, glycine 338, and glycine 433 to asparagine 437.

It belongs to the FGGY kinase family. Requires a divalent metal cation as cofactor.

It localises to the plastid. It is found in the chloroplast. The enzyme catalyses D-ribulose + ATP = D-ribulose 5-phosphate + ADP + H(+). In terms of biological role, exhibits ATP hydrolysis without substrate. Can phosphorylate D-ribulose with low efficiency. The polypeptide is D-ribulose kinase (Arabidopsis thaliana (Mouse-ear cress)).